Reading from the N-terminus, the 225-residue chain is PKHD-type hydroxylase YbiX (225 aa).

The Fe2OG dioxygenase domain maps to threonine 78–serine 177. Fe cation is bound by residues histidine 96, aspartate 98, and histidine 158. Arginine 168 contributes to the 2-oxoglutarate binding site.

It depends on Fe(2+) as a cofactor. L-ascorbate serves as cofactor.

This Escherichia coli O6:K15:H31 (strain 536 / UPEC) protein is PKHD-type hydroxylase YbiX.